A 322-amino-acid polypeptide reads, in one-letter code: Germ cell-specific gene 1-like protein (322 aa).

The Cytoplasmic segment spans residues 1–8 (MKTSRRGR). A helical membrane pass occupies residues 9–29 (ALLAVALNLLALLFATTAFLT). Over 30–122 (TYWCQGTQRV…FIDLAPASEK (93 aa)) the chain is Extracellular. The helical transmembrane segment at 123-143 (GVLWLSVVSEVLYILLLVVGF) threads the bilayer. The Cytoplasmic segment spans residues 144-163 (SLMCLELVHSSSVIDGLKLN). The helical transmembrane segment at 164–184 (AFAAVFTVLSGLLGMVAHMMY) threads the bilayer. The Extracellular portion of the chain corresponds to 185-207 (TQVFQVTVSLGPEDWRPHSWDYG). The chain crosses the membrane as a helical span at residues 208-228 (WSFCLAWGSFTCCMAASVTTL). Over 229–322 (NSYTKTVIEF…RQCWVLGHWV (94 aa)) the chain is Cytoplasmic. At Ser274 the chain carries Phosphoserine.

It belongs to the GSG1 family. As to quaternary structure, component of the inner core of AMPAR complexes. AMPAR complexes consist of an inner core made of 4 pore-forming GluA/GRIA proteins (GRIA1, GRIA2, GRIA3 and GRIA4) and 4 major auxiliary subunits arranged in a twofold symmetry. One of the two pairs of distinct binding sites is occupied either by CNIH2, CNIH3 or CACNG2, CACNG3. The other harbors CACNG2, CACNG3, CACNG4, CACNG8 or GSG1L. This inner core of AMPAR complexes is complemented by outer core constituents binding directly to the GluA/GRIA proteins at sites distinct from the interaction sites of the inner core constituents. Outer core constituents include at least PRRT1, PRRT2, CKAMP44/SHISA9, FRRS1L and NRN1. The proteins of the inner and outer core serve as a platform for other, more peripherally associated AMPAR constituents. Alone or in combination, these auxiliary subunits control the gating and pharmacology of the AMPAR complexes and profoundly impact their biogenesis and protein processing. As to expression, expressed in the brain, including hippocampus (at protein level).

It localises to the cell membrane. The protein resides in the synapse. As a component of the inner core of AMPAR complexes, modifies AMPA receptor (AMPAR) gating. This Mus musculus (Mouse) protein is Germ cell-specific gene 1-like protein (Gsg1l).